The primary structure comprises 604 residues: MHFPKKKHSGNLSVVELPKEALQDSLTAAQITFKRYAHPNGNAGSAERPRHLKVESAPVVKSEPSLPRMRQPEPRSINHQYSRETLPGHSEAFSVPTTPLQTIHYDVRNKASNSPSSIAAAEAAAYLAHTNSFSNRSSGVGSRDPVMDTETKPPRAPSALKNELQLNRMRIPPPSYDNNVRSRSISPQVSYSTSLSSSCSISSDGEETSYREKSTDEAFPPEPSMSSYSLASKASAKASLTDPSQRQQESDYTAMNKLNGGNIIYKGTLPDLIPRSQRKTSKPRFKHKLLRSPEQQQENLSRVYSDQTQNGRAIINTQQNVKLKTTMRRGKYAITDNDETFPYDRKSVSSDSDTDEDSNVMEIKDKKKKSRRSKIKKGLKTTAAVVGSSTSVLPFPHHHHHHHQLHNPNSHHLHTHHHTSSHKFNEDKPWKSHRDLGFITEQERKRYESMWVSNRYSYLRLLPWWPSLANEDDESHLQPLNLPQDGLMLNLVVKDIWYRSNLPRDLLVQIYNMVDTRKDGTLDRKSFIVGMWLVDQCLYGRKLTNELDQRVWNSVDGYVLGTINVKPATSDHYHNANNPLDKPSKLSVRQELKNIKRDLRNVRI.

Disordered stretches follow at residues 38–77 (HPNGNAGSAERPRHLKVESAPVVKSEPSLPRMRQPEPRSI), 133–249 (FSNR…RQQE), 267–300 (GTLPDLIPRSQRKTSKPRFKHKLLRSPEQQQENL), 338–380 (DETF…KGLK), and 394–428 (PFPHHHHHHHQLHNPNSHHLHTHHHTSSHKFNEDK). Positions 176–185 (YDNNVRSRSI) are enriched in polar residues. Composition is skewed to low complexity over residues 186 to 203 (SPQVSYSTSLSSSCSISS) and 224 to 240 (SMSSYSLASKASAKASL). 3 stretches are compositionally biased toward basic residues: residues 276 to 290 (SQRKTSKPRFKHKLL), 366 to 379 (KKKKSRRSKIKKGL), and 396 to 421 (PHHHHHHHQLHNPNSHHLHTHHHTSS). The EH domain occupies 469-559 (ANEDDESHLQ…RVWNSVDGYV (91 aa)).

This sequence belongs to the IRS4 family. As to quaternary structure, interacts with INP51.

Functionally, with IRS4, acts as a positive regulator of INP51 activity and phosphatidylinositol 4,5-bisphosphate turnover. Negatively regulates signaling through the cell integrity pathway, including the MAP kinase SLT2. The chain is Protein TAX4 (TAX4) from Saccharomyces cerevisiae (strain YJM789) (Baker's yeast).